Here is a 299-residue protein sequence, read N- to C-terminus: MDGIIPINKERGMTSHDVVAKVRGILRTKKVGHSGTLDPSVDGVLPICVGRATKVVDYLMGFGKVYQGSITLGFSTTTEDLDGEVVETKKLDEPLTDEQINQTLTAMTGTLIQIPPMYSAVKVKGRKLYEYARAGETVERPQRQIKVYDFVQTRPSIFDAEKGQQTIYFKVSCGKGTYVRTLAVDFGRHFGLPAVMSDLSRLASGGFKIEECLTLSDLEQARDEDRLSTVIQPLDRALDNFNTITISDVEWEIVKNGGFLNRPQTDEIIALKYNGNIQALYQYDTNRQNYIPKKMLLVR.

Catalysis depends on D38, which acts as the Nucleophile.

It belongs to the pseudouridine synthase TruB family. Type 1 subfamily.

The catalysed reaction is uridine(55) in tRNA = pseudouridine(55) in tRNA. Responsible for synthesis of pseudouridine from uracil-55 in the psi GC loop of transfer RNAs. The chain is tRNA pseudouridine synthase B from Pediococcus pentosaceus (strain ATCC 25745 / CCUG 21536 / LMG 10740 / 183-1w).